We begin with the raw amino-acid sequence, 184 residues long: Photosystem I assembly protein Ycf4 (184 aa).

Transmembrane regions (helical) follow at residues 22–42 and 57–77; these read LCWA…GTSS and ILFF…LFIS.

This sequence belongs to the Ycf4 family.

Its subcellular location is the plastid. The protein resides in the chloroplast thylakoid membrane. Its function is as follows. Seems to be required for the assembly of the photosystem I complex. In Daucus carota (Wild carrot), this protein is Photosystem I assembly protein Ycf4.